The chain runs to 414 residues: Lysocardiolipin acyltransferase 1 (414 aa).

Transmembrane regions (helical) follow at residues 47–67 and 86–106; these read FILT…SPFL and ATWL…KVII. Positions 123–128 match the HXXXXD motif motif; that stretch reads HRTRMD. K221 bears the N6-acetyllysine mark. A run of 2 helical transmembrane segments spans residues 340–360 and 362–382; these read LRVL…SPAM and LLIY…VIFV.

This sequence belongs to the 1-acyl-sn-glycerol-3-phosphate acyltransferase family. As to expression, expressed at higher level in heart, kidney and pancreas than in brain, spleen, liver, lung, small intestine and placenta.

It is found in the endoplasmic reticulum membrane. The enzyme catalyses a 1-acyl-sn-glycero-3-phosphate + an acyl-CoA = a 1,2-diacyl-sn-glycero-3-phosphate + CoA. It catalyses the reaction a 1-acyl-sn-glycero-3-phospho-(1D-myo-inositol) + an acyl-CoA = a 1,2-diacyl-sn-glycero-3-phospho-(1D-myo-inositol) + CoA. The catalysed reaction is 1-acyl-sn-glycero-3-phospho-(1'-sn-glycerol) + an acyl-CoA = a 1,2-diacyl-sn-glycero-3-phospho-(1'-sn-glycerol) + CoA. It carries out the reaction 1-hexadecanoyl-sn-glycero-3-phosphate + (9Z)-octadecenoyl-CoA = 1-hexadecanoyl-2-(9Z-octadecenoyl)-sn-glycero-3-phosphate + CoA. The enzyme catalyses 1-(9Z-octadecenoyl)-sn-glycero-3-phosphate + (9Z)-octadecenoyl-CoA = 1,2-di-(9Z-octadecenoyl)-sn-glycero-3-phosphate + CoA. It catalyses the reaction 1-(9Z,12Z)-octadecadienoyl-sn-glycero-3-phosphate + (9Z)-octadecenoyl-CoA = 1-(9Z,12Z)-octadecadienoyl-2-(9Z)-octadecenoyl-sn-glycero-3-phosphate + CoA. The catalysed reaction is 1-(9Z,12Z,15Z)-octadecatrienoyl-sn-glycero-3-phosphate + (9Z)-octadecenoyl-CoA = 1-(9Z,12Z,15Z)-octadecatrienoyl-2-(9Z)-octadecenoyl-sn-glycero-3-phosphate + CoA. It carries out the reaction 1-(9Z-octadecenoyl)-sn-glycero-3-phosphate + hexadecanoyl-CoA = 1-(9Z)-octadecenoyl-2-hexadecanoyl-sn-glycero-3-phosphate + CoA. The enzyme catalyses 1-(9Z-octadecenoyl)-sn-glycero-3-phosphate + octadecanoyl-CoA = 1-(9Z-octadecenoyl)-2-octadecanoyl-sn-glycero-3-phosphate + CoA. It catalyses the reaction 1-acyl-sn-glycero-3-phospho-(1'-sn-glycerol) + (9Z)-octadecenoyl-CoA = 1-acyl-2-(9Z-octadecenoyl)-sn-glycero-3-phospho-(1'-sn-glycerol) + CoA. The catalysed reaction is a 1-acyl-sn-glycero-3-phospho-(1D-myo-inositol) + (9Z)-octadecenoyl-CoA = a 1-acyl-2-(9Z-octadecenoyl)-sn-glycero-3-phospho-(1D-myo-inositol) + CoA. It carries out the reaction 1-hexadecanoyl-sn-glycero-3-phospho-(1D-myo-inositol) + hexadecanoyl-CoA = 1,2-dihexadecanoyl-sn-glycero-3-phospho-(1D-myo-inositol) + CoA. The enzyme catalyses 1-hexadecanoyl-sn-glycero-3-phospho-(1D-myo-inositol) + octadecanoyl-CoA = 1-hexadecanoyl-2-octadecanoyl-sn-glycero-3-phospho-(1D-myo-inositol) + CoA. It catalyses the reaction 1-hexadecanoyl-sn-glycero-3-phospho-(1D-myo-inositol) + (9Z)-octadecenoyl-CoA = 1-hexadecanoyl-2-(9Z-octadecenoyl)-sn-glycero-3-phospho-(1D-myo-inositol) + CoA. The catalysed reaction is 1-hexadecanoyl-sn-glycero-3-phospho-(1D-myo-inositol) + (9Z,12Z)-octadecadienoyl-CoA = 1-hexadecanoyl-2-(9Z,12Z-octadecadienoyl)-sn-glycero-3-phospho-(1D-myo-inositol) + CoA. It carries out the reaction 1-hexadecanoyl-sn-glycero-3-phospho-(1D-myo-inositol) + (5Z,8Z,11Z,14Z)-eicosatetraenoyl-CoA = 1-hexadecanoyl-2-(5Z,8Z,11Z,14Z-eicosatetraenoyl)-sn-glycero-3-phospho-D-myo-inositol + CoA. The enzyme catalyses 1-hexadecanoyl-sn-glycero-3-phospho-(1'-sn-glycerol) + hexadecanoyl-CoA = 1,2-dihexadecanoyl-sn-glycero-3-phospho-(1'-sn-glycerol) + CoA. It catalyses the reaction 1-hexadecanoyl-sn-glycero-3-phospho-(1'-sn-glycerol) + octadecanoyl-CoA = 1-hexadecanoyl-2-octadecanoyl-sn-glycero-3-phospho-(1'-sn-glycerol) + CoA. The catalysed reaction is 1-hexadecanoyl-sn-glycero-3-phospho-(1'-sn-glycerol) + (9Z)-octadecenoyl-CoA = 1-hexadecanoyl-2-(9Z-octadecenoyl)-sn-glycero-3-phospho-(1'-sn-glycerol) + CoA. It carries out the reaction 1-hexadecanoyl-sn-glycero-3-phospho-(1'-sn-glycerol) + (9Z,12Z)-octadecadienoyl-CoA = 1-hexadecanoyl-2-(9Z,12Z-octadecadienoyl)-sn-glycero-3-phospho-(1'-sn-glycerol) + CoA. The enzyme catalyses 1-tetradecanoyl-sn-glycero-3-phospho-(1'-sn-glycerol) + (9Z)-octadecenoyl-CoA = 1-tetradecanoyl-2-(9Z-octadecenoyl)-sn-glycero-3-phospho-(1'-sn-glycerol) + CoA. It catalyses the reaction 1-octadecanoyl-sn-glycero-3-phospho-(1'-sn-glycerol) + (9Z)-octadecenoyl-CoA = 1-octadecanoyl-2-(9Z-octadecenoyl)-sn-glycero-3-phospho-(1'-sn-glycerol) + CoA. The catalysed reaction is 1-(9Z-octadecenoyl)-sn-glycero-3-phospho-(1'-sn-glycerol) + (9Z)-octadecenoyl-CoA = 1,2-di-(9Z-octadecenoyl)-sn-glycero-3-phospho-(1'-sn-glycerol) + CoA. It carries out the reaction 1-hexadecanoyl-sn-glycero-3-phospho-(1D-myo-inositol) + dodecanoyl-CoA = 1-hexadecanoyl-2-dodecanoyl-sn-glycero-3-phospho-(1D-myo-inositol) + CoA. The enzyme catalyses 1',3'-bis-[1-acyl-sn-glycero-3-phospho]-glycerol + (9Z)-octadecenoyl-CoA = 1'-[1-acyl-2-(9Z)-octadecenoyl-sn-glycero-3-phospho],3'-[1-acyl,2-hydroxy-sn-glycero-3-phospho]-glycerol + CoA. It catalyses the reaction 1'-[1,2-diacyl-sn-glycero-3-phospho],3'-[1-acyl-sn-glycero-3-phospho]-glycerol + (9Z)-octadecenoyl-CoA = 1'-[1,2-diacyl-sn-glycero-3-phospho],3'-[1-acyl,2-(9Z)-octadecenoyl-sn-glycero-3-phospho]-glycerol + CoA. The catalysed reaction is 1'-[1,2-diacyl-sn-glycero-3-phospho],3'-[1-acyl-sn-glycero-3-phospho]-glycerol + (9Z,12Z)-octadecadienoyl-CoA = 1'-[1,2-diacyl-sn-glycero-3-phospho],3'-[1-acyl,2-(9Z,12Z)-octadecadienoyl-sn-glycero-3-phospho]-glycerol + CoA. It carries out the reaction 1'-[1,2-diacyl-sn-glycero-3-phospho],3'-[1-acyl-sn-glycero-3-phospho]-glycerol + dodecanoyl-CoA = 1'-[1,2-diacyl-sn-glycero-3-phospho],3'-[1-acyl,2-dodecanoyl-sn-glycero-3-phospho]-glycerol + CoA. The enzyme catalyses 1',3'-bis-[1-acyl-sn-glycero-3-phospho]-glycerol + dodecanoyl-CoA = 1'-[1-acyl-2-dodecanoyl-sn-glycero-3-phospho],3'-[1-acyl,2-hydroxy-sn-glycero-3-phospho]-glycerol + CoA. It catalyses the reaction a 1-acyl-sn-glycero-3-phosphate + (9Z)-octadecenoyl-CoA = a 1-acyl-2-(9Z-octadecenoyl)-sn-glycero-3-phosphate + CoA. The catalysed reaction is 1',3'-bis-[1-acyl-sn-glycero-3-phospho]-glycerol + (9Z,12Z)-octadecadienoyl-CoA = 1'-[1-acyl-2-(9Z,12Z)-octadecadienoyl-sn-glycero-3-phospho],3'-[1-acyl,2-hydroxy-sn-glycero-3-phospho]-glycerol + CoA. It carries out the reaction 1',3'-bis-[1-acyl-sn-glycero-3-phospho]-glycerol + hexadecanoyl-CoA = 1'-[1-acyl-2-hexadecanoyl-sn-glycero-3-phospho],3'-[1-acyl,2-hydroxy-sn-glycero-3-phospho]-glycerol + CoA. The enzyme catalyses 1',3'-bis-[1-acyl-sn-glycero-3-phospho]-glycerol + octadecanoyl-CoA = 1'-[1-acyl-2-octadecanoyl-sn-glycero-3-phospho],3'-[1-acyl,2-hydroxy-sn-glycero-3-phospho]-glycerol + CoA. It catalyses the reaction 1'-[1,2-diacyl-sn-glycero-3-phospho],3'-[1-acyl-sn-glycero-3-phospho]-glycerol + octanoyl-CoA = 1'-[1,2-diacyl-sn-glycero-3-phospho],3'-[1-acyl,2-octanoyl-sn-glycero-3-phospho]-glycerol + CoA. The catalysed reaction is 1',3'-bis-[1-acyl-sn-glycero-3-phospho]-glycerol + octanoyl-CoA = 1'-[1-acyl-2-octanoyl-sn-glycero-3-phospho],3'-[1-acyl,2-hydroxy-sn-glycero-3-phospho]-glycerol + CoA. It carries out the reaction 1'-[1,2-diacyl-sn-glycero-3-phospho],3'-[1-acyl-sn-glycero-3-phospho]-glycerol + hexadecanoyl-CoA = 1'-[1,2-diacyl-sn-glycero-3-phospho],3'-[1-acyl,2-hexadecanoyl-sn-glycero-3-phospho]-glycerol + CoA. The enzyme catalyses 1'-[1,2-diacyl-sn-glycero-3-phospho],3'-[1-acyl-sn-glycero-3-phospho]-glycerol + (5Z,8Z,11Z,14Z)-eicosatetraenoyl-CoA = 1'-[1,2-diacyl-sn-glycero-3-phospho],3'-[1-acyl,2-(5Z,8Z,11Z,14Z)-eicosatetraenoyl-sn-glycero-3-phospho]-glycerol + CoA. It catalyses the reaction 1',3'-bis-[1-acyl-sn-glycero-3-phospho]-glycerol + (5Z,8Z,11Z,14Z)-eicosatetraenoyl-CoA = 1'-[1-acyl-2-(5Z,8Z,11Z,14Z)-eicosatetraenoyl-sn-glycero-3-phospho],3'-[1-acyl,2-hydroxy-sn-glycero-3-phospho]-glycerol + CoA. The catalysed reaction is a 1-acyl-sn-glycero-3-phospho-(1D-myo-inositol) + octadecanoyl-CoA = a 1-acyl-2-octadecanoyl-sn-glycero-3-phospho-(1D-myo-inositol) + CoA. It carries out the reaction a 2-acyl-sn-glycero-3-phospho-D-myo-inositol + octadecanoyl-CoA = 1-octadecanoyl-2-acyl-sn-glycero-3-phospho-1D-myo-inositol + CoA. It participates in phospholipid metabolism; CDP-diacylglycerol biosynthesis; CDP-diacylglycerol from sn-glycerol 3-phosphate: step 2/3. Exhibits acyl-CoA:lysocardiolipin acyltransferase (ALCAT) activity; catalyzes the reacylation of lyso-cardiolipin to cardiolipin (CL), a key step in CL remodeling. Recognizes both monolysocardiolipin and dilysocardiolipin as substrates with a preference for linoleoyl-CoA and oleoyl-CoA as acyl donors. Also exhibits 1-acyl-sn-glycerol-3-phosphate acyltransferase activity (AGPAT) activity; converts 1-acyl-sn-glycerol-3- phosphate (lysophosphatidic acid or LPA) into 1,2-diacyl-sn-glycerol-3- phosphate (phosphatidic acid or PA) by incorporating an acyl moiety at the sn-2 position of the glycerol backbone. Possesses both lysophosphatidylinositol acyltransferase (LPIAT) and lysophosphatidylglycerol acyltransferase (LPGAT) activities. Required for establishment of the hematopoietic and endothelial lineages. In Homo sapiens (Human), this protein is Lysocardiolipin acyltransferase 1 (LCLAT1).